An 818-amino-acid polypeptide reads, in one-letter code: Rho GTPase-activating protein 44 (818 aa).

Residues 14–249 (QTVGRAEKTE…IKAQQEAWVE (236 aa)) form the BAR domain. Positions 255 to 445 (KPLEEHLTIS…PIIQHADWFF (191 aa)) constitute a Rho-GAP domain. 3 disordered regions span residues 467 to 493 (ANYS…RPLS), 530 to 772 (SSAG…SMST), and 789 to 818 (TLRL…STAL). Residues 479–489 (PADRRQPEQAR) show a composition bias toward basic and acidic residues. A Phosphoserine modification is found at Ser-493. Low complexity predominate over residues 563–579 (QPLDSPAAPALSPSGLG). Residues 598 to 611 (GSAQKGSPGSSQGT) are compositionally biased toward polar residues. Low complexity-rich tracts occupy residues 614 to 641 (AGTQ…DQSP) and 688 to 708 (SPYG…LSPA). The interaction with BST2 stretch occupies residues 731–818 (KPRQRPTLPP…SEEESESTAL (88 aa)). A compositionally biased stretch (polar residues) spans 746-757 (VNLSASSPQSTE). Positions 764 to 767 (MSPG) match the PDZ-binding motif. Positions 794–809 (PLEHMRRHSVTDKRDS) are enriched in basic and acidic residues. Ser-809 carries the post-translational modification Phosphoserine. Residues 815–818 (STAL) carry the PDZ-binding motif.

In terms of assembly, interacts with BST2 (via cytoplasmic domain). Interacts (probably via PDZ-binding motif) with SHANK3 (via PDZ domain); the interaction takes place in dendritic spines and promotes GRIA1 exocytosis. In terms of tissue distribution, highly expressed in brain. Expressed at weak level in other tissues.

It is found in the cell projection. It localises to the dendritic spine. The protein resides in the recycling endosome. The protein localises to the presynapse. Its subcellular location is the dendrite. Its function is as follows. GTPase-activating protein (GAP) that stimulates the GTPase activity of Rho-type GTPases. Thereby, controls Rho-type GTPases cycling between their active GTP-bound and inactive GDP-bound states. Acts as a GAP at least for CDC42 and RAC1. In neurons, is involved in dendritic spine formation and synaptic plasticity in a specific RAC1-GAP activity. Limits the initiation of exploratory dendritic filopodia. Recruited to actin-patches that seed filopodia, binds specifically to plasma membrane sections that are deformed inward by acto-myosin mediated contractile forces. Acts through GAP activity on RAC1 to reduce actin polymerization necessary for filopodia formation. In association with SHANK3, promotes GRIA1 exocytosis from recycling endosomes and spine morphological changes associated to long-term potentiation. The sequence is that of Rho GTPase-activating protein 44 from Homo sapiens (Human).